A 5900-amino-acid chain; its full sequence is Midasin (5900 aa).

A disordered region spans residues 250–270 (GSSVKSKKGGEQQQEGEGEDE). AAA-ATPase protomer regions lie at residues 278–583 (TNTV…LRKQ), 673–1012 (EKIS…ALNY), 1101–1346 (PIIP…IAGY), 1411–1721 (IVWT…MDKQ), 1840–2089 (RGMQ…HVLT), and 2167–2451 (LENI…EIYM). Residues 302-309 (GVTGSGKT) and 689-696 (GETGTGKT) contribute to the ATP site. A disordered region spans residues 796-826 (QTTTNNTKENNNNNNNNNNNNNNNNNNKKRT). The segment covering 797-821 (TTTNNTKENNNNNNNNNNNNNNNNN) has biased composition (low complexity). ATP-binding positions include 1135 to 1142 (GPTSSGKT), 1438 to 1445 (GETGCSKT), 1852 to 1859 (GSPGVGKT), and 2184 to 2191 (GPTSTSKT). The interval 2562–4965 (ESAIKSILCE…EGKGKKDVSD (2404 aa)) is linker. The tract at residues 4932–5598 (GDDGEGGEGG…SVEEKKLTRE (667 aa)) is disordered. Over residues 4984-5008 (KDEDEDEEKEEKDEDEGFDMQDDFE) the composition is skewed to acidic residues. A compositionally biased stretch (basic and acidic residues) spans 5009 to 5055 (GEMHDIKKDENKDEDKKDDPNNEKENDKEMGDLEKPEDNVVDEKLWD). Over residues 5056–5076 (EQDVQDEEEQDEEGKGDETNS) the composition is skewed to acidic residues. A compositionally biased stretch (basic and acidic residues) spans 5079-5113 (MMAKQDGKDDNDDDKKDDDKKDDKKKKKEENGKPD). 2 stretches are compositionally biased toward acidic residues: residues 5114–5130 (ENEEGEEGKDDEEEDGK) and 5139–5156 (GASDEDDFGQEENEDDVI). Residues 5159-5173 (EQEKEENHGDPRGDD) show a composition bias toward basic and acidic residues. Over residues 5174–5199 (QMEIPEDLELEDPDEGKEDDEQQDGG) the composition is skewed to acidic residues. Residues 5213-5224 (DVSKEEEKKKEL) are compositionally biased toward basic and acidic residues. 2 stretches are compositionally biased toward acidic residues: residues 5225-5255 (DGDEKEESDQDGDEEKEDEEKEDGDEDEDKE) and 5273-5286 (EGDEPEKEQPEEDQ). The span at 5297-5313 (ETPKDSEQPLGVKDKTG) shows a compositional bias: basic and acidic residues. Residues 5339 to 5349 (GMTQPTPSEND) show a composition bias toward polar residues. Residues 5410 to 5442 (SEPKEKAPKQDPNAKENENQDYEFIKDDEKLDK) show a composition bias toward basic and acidic residues. The segment covering 5448–5460 (QALAAATDTQLQD) has biased composition (low complexity). Acidic residues predominate over residues 5469-5487 (DQAEQEEDQMDIDEEDDMD). Composition is skewed to basic and acidic residues over residues 5488–5536 (VDHK…KDQQ) and 5551–5570 (QFTKEQLENLTNLDKEKAVL). Residues 5571 to 5590 (DDGDDQEMEQDGDQDDEESV) show a composition bias toward acidic residues. Residues 5696–5889 (QVLLAIDDTE…NIPSILSDTL (194 aa)) enclose the VWFA domain.

This sequence belongs to the midasin family. As to quaternary structure, associates with pre-60S ribosomes in the nucleoplasm.

It is found in the nucleus. It localises to the nucleolus. The protein localises to the nucleoplasm. In terms of biological role, nuclear chaperone required for maturation and nuclear export of pre-60S ribosome subunits. Functions at successive maturation steps to remove ribosomal factors at critical transition points, first driving the exit of early pre-60S particles from the nucleolus and then driving late pre-60S particles from the nucleus. This chain is Midasin (mdn1), found in Dictyostelium discoideum (Social amoeba).